The chain runs to 456 residues: Probable mannan endo-1,4-beta-mannosidase F (456 aa).

The first 18 residues, 1-18, serve as a signal peptide directing secretion; it reads MRPLSSAALLSAIGAVAA. In terms of domain architecture, CBM1 spans 19 to 54; that stretch reads QVGPWGQCGGQSYTGGTSCVSGWACVFLNDWYSQCQ. Residues 79–110 form a disordered region; it reads STSVSATAPPSSTSSSTASVSSSTSSTPIPTS. The tract at residues 79 to 113 is ser-rich linker; it reads STSVSATAPPSSTSSSTASVSSSTSSTPIPTSSGS. A catalytic region spans residues 114-456; it reads FVKAEGLKFN…CAVIDHVSRI (343 aa). 2 residues coordinate substrate: Trp166 and Asn280. The active-site Proton donor is the Glu281. Substrate is bound at residue Tyr356. The Nucleophile role is filled by Glu390. Trp420 serves as a coordination point for substrate.

Belongs to the glycosyl hydrolase 5 (cellulase A) family.

It localises to the secreted. It carries out the reaction Random hydrolysis of (1-&gt;4)-beta-D-mannosidic linkages in mannans, galactomannans and glucomannans.. Its function is as follows. Endo-1,4-mannanase, a crucial enzyme for depolymerization of seed galactomannans and wood galactoglucomannans. The protein is Probable mannan endo-1,4-beta-mannosidase F (manF) of Neosartorya fischeri (strain ATCC 1020 / DSM 3700 / CBS 544.65 / FGSC A1164 / JCM 1740 / NRRL 181 / WB 181) (Aspergillus fischerianus).